The primary structure comprises 92 residues: Small ribosomal subunit protein uS19c (92 aa).

Belongs to the universal ribosomal protein uS19 family.

Its subcellular location is the plastid. It is found in the chloroplast. Its function is as follows. Protein S19 forms a complex with S13 that binds strongly to the 16S ribosomal RNA. The chain is Small ribosomal subunit protein uS19c (rps19) from Trieres chinensis (Marine centric diatom).